We begin with the raw amino-acid sequence, 289 residues long: Glycine--tRNA ligase alpha subunit (289 aa).

The protein belongs to the class-II aminoacyl-tRNA synthetase family. In terms of assembly, tetramer of two alpha and two beta subunits.

It is found in the cytoplasm. It catalyses the reaction tRNA(Gly) + glycine + ATP = glycyl-tRNA(Gly) + AMP + diphosphate. The protein is Glycine--tRNA ligase alpha subunit of Rickettsia typhi (strain ATCC VR-144 / Wilmington).